The primary structure comprises 130 residues: Holo-[acyl-carrier-protein] synthase (130 aa).

2 residues coordinate Mg(2+): aspartate 9 and glutamate 58.

This sequence belongs to the P-Pant transferase superfamily. AcpS family. The cofactor is Mg(2+).

The protein resides in the cytoplasm. The catalysed reaction is apo-[ACP] + CoA = holo-[ACP] + adenosine 3',5'-bisphosphate + H(+). Transfers the 4'-phosphopantetheine moiety from coenzyme A to a Ser of acyl-carrier-protein. The polypeptide is Holo-[acyl-carrier-protein] synthase (Mycobacterium tuberculosis (strain CDC 1551 / Oshkosh)).